The primary structure comprises 76 residues: DNA-directed RNA polymerase subunit epsilon (76 aa).

The protein belongs to the RNA polymerase subunit epsilon family. In terms of assembly, RNAP is composed of a core of 2 alpha, a beta and a beta' subunit. The core is associated with a delta subunit, and at least one of epsilon or omega. When a sigma factor is associated with the core the holoenzyme is formed, which can initiate transcription.

The enzyme catalyses RNA(n) + a ribonucleoside 5'-triphosphate = RNA(n+1) + diphosphate. A non-essential component of RNA polymerase (RNAP). The sequence is that of DNA-directed RNA polymerase subunit epsilon from Streptococcus gordonii (strain Challis / ATCC 35105 / BCRC 15272 / CH1 / DL1 / V288).